Consider the following 332-residue polypeptide: Methionyl-tRNA formyltransferase (332 aa).

124 to 127 serves as a coordination point for (6S)-5,6,7,8-tetrahydrofolate; that stretch reads SLLP.

The protein belongs to the Fmt family.

The catalysed reaction is L-methionyl-tRNA(fMet) + (6R)-10-formyltetrahydrofolate = N-formyl-L-methionyl-tRNA(fMet) + (6S)-5,6,7,8-tetrahydrofolate + H(+). Functionally, attaches a formyl group to the free amino group of methionyl-tRNA(fMet). The formyl group appears to play a dual role in the initiator identity of N-formylmethionyl-tRNA by promoting its recognition by IF2 and preventing the misappropriation of this tRNA by the elongation apparatus. This chain is Methionyl-tRNA formyltransferase, found in Polynucleobacter asymbioticus (strain DSM 18221 / CIP 109841 / QLW-P1DMWA-1) (Polynucleobacter necessarius subsp. asymbioticus).